Consider the following 247-residue polypeptide: uncharacterized protein (247 aa).

Low complexity-rich tracts occupy residues 1–12 (MFSPQQPMRNYP) and 21–43 (PNQR…AQQQ). Disordered regions lie at residues 1–43 (MFSP…AQQQ) and 157–247 (LSKS…RLYI). 2 stretches are compositionally biased toward basic and acidic residues: residues 170-196 (ESEK…DGNK) and 210-229 (KTTD…KKEA).

This is an uncharacterized protein from Bacillus subtilis (strain 168).